The primary structure comprises 273 residues: Putative phosphoenolpyruvate synthase regulatory protein (273 aa).

153–160 (GVSRCGKT) lines the ADP pocket.

This sequence belongs to the pyruvate, phosphate/water dikinase regulatory protein family. PSRP subfamily.

It carries out the reaction [pyruvate, water dikinase] + ADP = [pyruvate, water dikinase]-phosphate + AMP + H(+). It catalyses the reaction [pyruvate, water dikinase]-phosphate + phosphate + H(+) = [pyruvate, water dikinase] + diphosphate. Functionally, bifunctional serine/threonine kinase and phosphorylase involved in the regulation of the phosphoenolpyruvate synthase (PEPS) by catalyzing its phosphorylation/dephosphorylation. This Yersinia pseudotuberculosis serotype I (strain IP32953) protein is Putative phosphoenolpyruvate synthase regulatory protein.